Reading from the N-terminus, the 553-residue chain is Protein YloV (553 aa).

The DhaL domain occupies 9-201; that stretch reads RTFAEMILAG…LLCVYEGFLA (193 aa).

The chain is Protein YloV (yloV) from Bacillus subtilis (strain 168).